The primary structure comprises 189 residues: Hypoxanthine/guanine phosphoribosyltransferase (189 aa).

The protein belongs to the purine/pyrimidine phosphoribosyltransferase family. Archaeal HPRT subfamily. Homodimer.

It is found in the cytoplasm. The enzyme catalyses IMP + diphosphate = hypoxanthine + 5-phospho-alpha-D-ribose 1-diphosphate. It catalyses the reaction GMP + diphosphate = guanine + 5-phospho-alpha-D-ribose 1-diphosphate. The protein operates within purine metabolism; IMP biosynthesis via salvage pathway; IMP from hypoxanthine: step 1/1. Its function is as follows. Catalyzes a salvage reaction resulting in the formation of IMP that is energically less costly than de novo synthesis. The polypeptide is Hypoxanthine/guanine phosphoribosyltransferase (Methanothermus fervidus (strain ATCC 43054 / DSM 2088 / JCM 10308 / V24 S)).